The following is a 273-amino-acid chain: Homeobox protein HMX2 (273 aa).

Residues 1–154 (MGSKEDVGKG…TGAAKKKTRT (154 aa)) are disordered. Residues 114 to 123 (PDFKEEKERL) are compositionally biased toward basic and acidic residues. The segment at residues 149 to 208 (KKKTRTVFSRSQVYQLESTFDMKRYLSSSERACLASSLQLTETQVKTWFQNRRNKWKRQL) is a DNA-binding region (homeobox).

This sequence belongs to the HMX homeobox family. Expressed in the developing CNS, including a specific expression in vestibular structures throughout inner ear development.

It localises to the nucleus. Its function is as follows. Transcription factor involved in specification of neuronal cell types and which is required for inner ear and hypothalamus development. The polypeptide is Homeobox protein HMX2 (Hmx2) (Mus musculus (Mouse)).